We begin with the raw amino-acid sequence, 432 residues long: D-amino acid dehydrogenase 1 (432 aa).

FAD is bound at residue Val-3 to Tyr-17.

Belongs to the DadA oxidoreductase family. Requires FAD as cofactor.

It carries out the reaction a D-alpha-amino acid + A + H2O = a 2-oxocarboxylate + AH2 + NH4(+). In terms of biological role, oxidative deamination of D-amino acids. In Pseudomonas putida (strain ATCC 47054 / DSM 6125 / CFBP 8728 / NCIMB 11950 / KT2440), this protein is D-amino acid dehydrogenase 1 (dadA1).